We begin with the raw amino-acid sequence, 512 residues long: AMP phosphorylase (512 aa).

AMP contacts are provided by residues G166, 192 to 197 (SRAITG), and T201. Catalysis depends on D254, which acts as the Proton donor. 2 residues coordinate AMP: S262 and K286.

It belongs to the thymidine/pyrimidine-nucleoside phosphorylase family. Type 2 subfamily.

It catalyses the reaction AMP + phosphate = alpha-D-ribose 1,5-bisphosphate + adenine. The enzyme catalyses CMP + phosphate = cytosine + alpha-D-ribose 1,5-bisphosphate. It carries out the reaction UMP + phosphate = alpha-D-ribose 1,5-bisphosphate + uracil. Its function is as follows. Catalyzes the conversion of AMP and phosphate to adenine and ribose 1,5-bisphosphate (R15P). Exhibits phosphorylase activity toward CMP and UMP in addition to AMP. Functions in an archaeal AMP degradation pathway, together with R15P isomerase and RubisCO. The polypeptide is AMP phosphorylase (Methanothrix thermoacetophila (strain DSM 6194 / JCM 14653 / NBRC 101360 / PT) (Methanosaeta thermophila)).